We begin with the raw amino-acid sequence, 284 residues long: Formamidopyrimidine-DNA glycosylase (284 aa).

Pro2 acts as the Schiff-base intermediate with DNA in catalysis. The active-site Proton donor is Glu3. Lys61 (proton donor; for beta-elimination activity) is an active-site residue. Positions 95, 115, and 157 each coordinate DNA. The FPG-type zinc finger occupies 243 to 277 (AVYGRAGQPCRRCGTAIVREPFMNRSSFRCPACQP). Catalysis depends on Arg267, which acts as the Proton donor; for delta-elimination activity.

This sequence belongs to the FPG family. In terms of assembly, monomer. The cofactor is Zn(2+).

The catalysed reaction is Hydrolysis of DNA containing ring-opened 7-methylguanine residues, releasing 2,6-diamino-4-hydroxy-5-(N-methyl)formamidopyrimidine.. It carries out the reaction 2'-deoxyribonucleotide-(2'-deoxyribose 5'-phosphate)-2'-deoxyribonucleotide-DNA = a 3'-end 2'-deoxyribonucleotide-(2,3-dehydro-2,3-deoxyribose 5'-phosphate)-DNA + a 5'-end 5'-phospho-2'-deoxyribonucleoside-DNA + H(+). Involved in base excision repair of DNA damaged by oxidation or by mutagenic agents. Acts as a DNA glycosylase that recognizes and removes damaged bases. Has a preference for oxidized purines, such as 7,8-dihydro-8-oxoguanine (8-oxoG). Has AP (apurinic/apyrimidinic) lyase activity and introduces nicks in the DNA strand. Cleaves the DNA backbone by beta-delta elimination to generate a single-strand break at the site of the removed base with both 3'- and 5'-phosphates. The chain is Formamidopyrimidine-DNA glycosylase from Acidothermus cellulolyticus (strain ATCC 43068 / DSM 8971 / 11B).